We begin with the raw amino-acid sequence, 342 residues long: S-adenosylmethionine:tRNA ribosyltransferase-isomerase (342 aa).

Belongs to the QueA family. As to quaternary structure, monomer.

Its subcellular location is the cytoplasm. It catalyses the reaction 7-aminomethyl-7-carbaguanosine(34) in tRNA + S-adenosyl-L-methionine = epoxyqueuosine(34) in tRNA + adenine + L-methionine + 2 H(+). It participates in tRNA modification; tRNA-queuosine biosynthesis. Transfers and isomerizes the ribose moiety from AdoMet to the 7-aminomethyl group of 7-deazaguanine (preQ1-tRNA) to give epoxyqueuosine (oQ-tRNA). This chain is S-adenosylmethionine:tRNA ribosyltransferase-isomerase, found in Listeria innocua serovar 6a (strain ATCC BAA-680 / CLIP 11262).